The chain runs to 287 residues: Large ribosomal subunit protein uL2 (287 aa).

Basic residues-rich tracts occupy residues 209–220 (GRNRWKARRPKV) and 258–287 (KTRKKKKQSNKLIVRRRRRSSKRSRGGRQS). Residues 209-287 (GRNRWKARRP…SKRSRGGRQS (79 aa)) form a disordered region.

Belongs to the universal ribosomal protein uL2 family. Part of the 50S ribosomal subunit. Forms a bridge to the 30S subunit in the 70S ribosome.

In terms of biological role, one of the primary rRNA binding proteins. Required for association of the 30S and 50S subunits to form the 70S ribosome, for tRNA binding and peptide bond formation. It has been suggested to have peptidyltransferase activity; this is somewhat controversial. Makes several contacts with the 16S rRNA in the 70S ribosome. The protein is Large ribosomal subunit protein uL2 of Acaryochloris marina (strain MBIC 11017).